Consider the following 59-residue polypeptide: Dybowskin-1CDYa (59 aa).

Residues 1–22 (MFTLKKSLLLLFFLGTINFSLC) form the signal peptide. Residues 23–44 (EEERNAEEERRDYPEERDVEVE) constitute a propeptide that is removed on maturation.

It belongs to the frog skin active peptide (FSAP) family. Brevinin subfamily. As to expression, expressed by the skin glands.

Its subcellular location is the secreted. Its function is as follows. Antimicrobial peptide. Has activity against the Gram-positive bacterium S.aureus (MIC=6 uM) and the Gram-negative bacterium E.coli (MIC=3 uM). Lacks hemolytic activity against human erythrocytes. This is Dybowskin-1CDYa from Rana dybowskii (Dybovsky's frog).